A 121-amino-acid polypeptide reads, in one-letter code: uncharacterized protein (121 aa).

Its subcellular location is the mitochondrion. This is an uncharacterized protein from Arabidopsis thaliana (Mouse-ear cress).